Here is a 159-residue protein sequence, read N- to C-terminus: 6,7-dimethyl-8-ribityllumazine synthase (159 aa).

5-amino-6-(D-ribitylamino)uracil contacts are provided by residues W26, 57 to 59, and 79 to 81; these read ALE and CVI. 84–85 lines the (2S)-2-hydroxy-3-oxobutyl phosphate pocket; the sequence is GT. H87 acts as the Proton donor in catalysis. N112 is a binding site for 5-amino-6-(D-ribitylamino)uracil. R126 provides a ligand contact to (2S)-2-hydroxy-3-oxobutyl phosphate.

The protein belongs to the DMRL synthase family.

The catalysed reaction is (2S)-2-hydroxy-3-oxobutyl phosphate + 5-amino-6-(D-ribitylamino)uracil = 6,7-dimethyl-8-(1-D-ribityl)lumazine + phosphate + 2 H2O + H(+). The protein operates within cofactor biosynthesis; riboflavin biosynthesis; riboflavin from 2-hydroxy-3-oxobutyl phosphate and 5-amino-6-(D-ribitylamino)uracil: step 1/2. Functionally, catalyzes the formation of 6,7-dimethyl-8-ribityllumazine by condensation of 5-amino-6-(D-ribitylamino)uracil with 3,4-dihydroxy-2-butanone 4-phosphate. This is the penultimate step in the biosynthesis of riboflavin. In Corynebacterium efficiens (strain DSM 44549 / YS-314 / AJ 12310 / JCM 11189 / NBRC 100395), this protein is 6,7-dimethyl-8-ribityllumazine synthase.